A 448-amino-acid polypeptide reads, in one-letter code: Proline iminopeptidase aneH (448 aa).

Residues 64 to 191 form the AB hydrolase-1 domain; that stretch reads PWMLYLQGGP…VEVFIGGGPC (128 aa). The Nucleophile role is filled by S164. The active site involves D397. Catalysis depends on H425, which acts as the Proton donor.

Belongs to the peptidase S33 family. In terms of assembly, homooligomer.

The protein localises to the cytoplasm. The catalysed reaction is Release of N-terminal proline from a peptide.. It functions in the pathway secondary metabolite biosynthesis. Proline iminopeptidase; part of the gene cluster that mediates the biosynthesis of aculenes, a unique type of norsesquiterpenes that contain a nordaucane skeleton linked to an L-proline moiety and are of mixed biosynthetic origin. The pathway begins with the synthesis of dauca-4,7-diene by the terpene cyclase aneC using farnesyl pyrophosphate (FPP) as substrate. The cytochrome P450 monooxygenase aneF then performs the initial oxidation at C-12 of dauca-4,7-diene to yield asperaculane D. Asperaculane D is substrate of the cytochrome P450 monooxygenase aneD for C-10 hydroxylation to yield asperaculane E. The cytochrome P450 monooxygenase aneG then converts asperaculane E into aculene D via C-2 oxidation. The monomodular nonribosomal peptide synthtase aneB adenylates L-proline and the thiohydrolase aneE transfers this activated L-proline derivative to aculenes D and C to produce respectively aculenes B and A. The dioxygenase aneA converts aculene D into aculene C, and aculene B into aculene A by introducing the 5,6-alkene moiety. Asperculanes A, B, C and F, as well as 14-prolyl asperculane C, might be shunt products of the pathway. This chain is Proline iminopeptidase aneH, found in Aspergillus aculeatus (strain ATCC 16872 / CBS 172.66 / WB 5094).